The sequence spans 311 residues: HPr kinase/phosphorylase (311 aa).

Catalysis depends on residues His138 and Lys159. 153–160 contacts ATP; that stretch reads GDSGIGKS. Ser160 provides a ligand contact to Mg(2+). Asp177 functions as the Proton acceptor; for phosphorylation activity. Proton donor; for dephosphorylation activity in the catalytic mechanism. The tract at residues 201–210 is important for the catalytic mechanism of both phosphorylation and dephosphorylation; that stretch reads LEIRGVGIID. Position 202 (Glu202) interacts with Mg(2+). Arg243 is a catalytic residue. An important for the catalytic mechanism of dephosphorylation region spans residues 264–269; it reads PVKTGR.

This sequence belongs to the HPrK/P family. Homohexamer. It depends on Mg(2+) as a cofactor.

It catalyses the reaction [HPr protein]-L-serine + ATP = [HPr protein]-O-phospho-L-serine + ADP + H(+). The catalysed reaction is [HPr protein]-O-phospho-L-serine + phosphate + H(+) = [HPr protein]-L-serine + diphosphate. Functionally, catalyzes the ATP- as well as the pyrophosphate-dependent phosphorylation of a specific serine residue in HPr, a phosphocarrier protein of the phosphoenolpyruvate-dependent sugar phosphotransferase system (PTS). HprK/P also catalyzes the pyrophosphate-producing, inorganic phosphate-dependent dephosphorylation (phosphorolysis) of seryl-phosphorylated HPr (P-Ser-HPr). The two antagonistic activities of HprK/P are regulated by several intracellular metabolites, which change their concentration in response to the absence or presence of rapidly metabolisable carbon sources (glucose, fructose, etc.) in the growth medium. Therefore, by controlling the phosphorylation state of HPr, HPrK/P is a sensor enzyme that plays a major role in the regulation of carbon metabolism and sugar transport: it mediates carbon catabolite repression (CCR), and regulates PTS-catalyzed carbohydrate uptake and inducer exclusion. The polypeptide is HPr kinase/phosphorylase (Streptococcus sanguinis (strain SK36)).